A 391-amino-acid chain; its full sequence is Chalcone synthase (391 aa).

The active site involves Cys-164.

Belongs to the thiolase-like superfamily. Chalcone/stilbene synthases family.

It catalyses the reaction (E)-4-coumaroyl-CoA + 3 malonyl-CoA + 3 H(+) = 2',4,4',6'-tetrahydroxychalcone + 3 CO2 + 4 CoA. It participates in secondary metabolite biosynthesis; flavonoid biosynthesis. In terms of biological role, the primary product of this enzyme is 4,2',4',6'-tetrahydroxychalcone (also termed naringenin-chalcone or chalcone) which can under specific conditions spontaneously isomerize into naringenin. In Dianthus caryophyllus (Carnation), this protein is Chalcone synthase (CHS).